We begin with the raw amino-acid sequence, 398 residues long: Argininosuccinate synthase (398 aa).

Ala-8–Ser-16 is a binding site for ATP. L-citrulline is bound at residue Tyr-87. Gly-117 serves as a coordination point for ATP. L-aspartate-binding residues include Thr-119, Asn-123, and Asp-124. Asn-123 serves as a coordination point for L-citrulline. Residues Arg-127, Ser-175, Glu-260, and Tyr-272 each contribute to the L-citrulline site.

This sequence belongs to the argininosuccinate synthase family. Type 1 subfamily. As to quaternary structure, homotetramer.

It localises to the cytoplasm. It catalyses the reaction L-citrulline + L-aspartate + ATP = 2-(N(omega)-L-arginino)succinate + AMP + diphosphate + H(+). It functions in the pathway amino-acid biosynthesis; L-arginine biosynthesis; L-arginine from L-ornithine and carbamoyl phosphate: step 2/3. This is Argininosuccinate synthase from Mycobacterium marinum (strain ATCC BAA-535 / M).